Consider the following 611-residue polypeptide: Procollagen galactosyltransferase 1-B (611 aa).

A signal peptide spans 1-24 (MSQAGVERLLKGLQILVLVLRLSA). Residues asparagine 85, asparagine 173, asparagine 370, asparagine 373, and asparagine 568 are each glycosylated (N-linked (GlcNAc...) asparagine). Over residues 576 to 591 (DRAKSRKTHQQEKLRS) the composition is skewed to basic and acidic residues. Positions 576–611 (DRAKSRKTHQQEKLRSEALNTPSMGSPFDNTARDEL) are disordered. The Prevents secretion from ER signature appears at 608–611 (RDEL).

It belongs to the glycosyltransferase 25 family.

Its subcellular location is the endoplasmic reticulum lumen. The enzyme catalyses (5R)-5-hydroxy-L-lysyl-[collagen] + UDP-alpha-D-galactose = (5R)-5-O-(beta-D-galactosyl)-5-hydroxy-L-lysyl-[collagen] + UDP + H(+). In terms of biological role, beta-galactosyltransferase that transfers beta-galactose to hydroxylysine residues of type I collagen. By acting on collagen glycosylation, facilitates the formation of collagen triple helix. The chain is Procollagen galactosyltransferase 1-B (colgalt1-b) from Xenopus laevis (African clawed frog).